A 351-amino-acid chain; its full sequence is Ribosomal RNA small subunit methyltransferase H (351 aa).

Residues 48 to 50 (GGY), Asp-67, Phe-94, Asp-115, and Gln-122 contribute to the S-adenosyl-L-methionine site. Positions 298–351 (GPVLPSEAETEVNPRARSAKLRAGERTDGPAPPPLSAIETLASLPAPQGRGTRR) are disordered.

The protein belongs to the methyltransferase superfamily. RsmH family.

It is found in the cytoplasm. The catalysed reaction is cytidine(1402) in 16S rRNA + S-adenosyl-L-methionine = N(4)-methylcytidine(1402) in 16S rRNA + S-adenosyl-L-homocysteine + H(+). Its function is as follows. Specifically methylates the N4 position of cytidine in position 1402 (C1402) of 16S rRNA. This Methylorubrum populi (strain ATCC BAA-705 / NCIMB 13946 / BJ001) (Methylobacterium populi) protein is Ribosomal RNA small subunit methyltransferase H.